The primary structure comprises 30 residues: MITDFQVYIALMAALLASVLAIRLGATLYQ.

Residues 7-29 (VYIALMAALLASVLAIRLGATLY) form a helical membrane-spanning segment.

This sequence belongs to the PsaM family.

It is found in the plastid. The protein localises to the chloroplast thylakoid membrane. The chain is Photosystem I reaction center subunit XII from Thalassiosira pseudonana (Marine diatom).